The following is a 122-amino-acid chain: Large ribosomal subunit protein uL14 (122 aa).

This sequence belongs to the universal ribosomal protein uL14 family. In terms of assembly, part of the 50S ribosomal subunit. Forms a cluster with proteins L3 and L19. In the 70S ribosome, L14 and L19 interact and together make contacts with the 16S rRNA in bridges B5 and B8.

In terms of biological role, binds to 23S rRNA. Forms part of two intersubunit bridges in the 70S ribosome. This chain is Large ribosomal subunit protein uL14, found in Lacticaseibacillus casei (strain BL23) (Lactobacillus casei).